The chain runs to 1350 residues: Probable serine/threonine-protein kinase DDB_G0278845 (1350 aa).

8 disordered regions span residues 66-109 (RELN…NNIR), 121-159 (ENGLLESPTSPIRTSSTPTTPTSPPFITSPPFITSPKGL), 179-249 (LANN…LNSI), 270-296 (SSINGNTTTTTTNTYSYNDNDNVNEYS), 337-396 (NNYN…RDDL), 431-506 (GSTI…EKKK), 525-596 (NDSN…IPTP), and 612-701 (NNNS…NTNE). The span at 84-98 (KYLTSSHSSVVIPQD) shows a compositional bias: polar residues. Low complexity-rich tracts occupy residues 127-140 (SPTSPIRTSSTPTT) and 181-210 (NNNNNNNNSNNSNNNSNSSNSNISCSNNSN). Residues 211–222 (KISRLINNSNTT) show a composition bias toward polar residues. A compositionally biased stretch (low complexity) spans 223–235 (DSNASIRSSNNNN). Acidic residues predominate over residues 236–246 (DDFDNNDDEDL). 2 stretches are compositionally biased toward low complexity: residues 270–293 (SSINGNTTTTTTNTYSYNDNDNVN) and 337–391 (NNYN…GYNN). A compositionally biased stretch (polar residues) spans 431 to 443 (GSTIFTSTSSDIA). The segment covering 454-482 (NENENENENENENENENDNDSDSENENEN) has biased composition (acidic residues). Low complexity-rich tracts occupy residues 483–495 (DNSIGNKSNKSNS) and 525–551 (NDSNNNNNNNNSGNNNSFISNGSPFSP). Residues 565-592 (PKPTLQRQRSNSKNVLYSPNASPSNSCK) show a composition bias toward polar residues. 3 stretches are compositionally biased toward low complexity: residues 612–637 (NNNSNNIENQNNNNNNIDNNIDNNID), 645–679 (NNNNNNNNNNNNNNNNNNNNNNNNNNNNNNNNNNN), and 690–701 (KKTPNNKINTNE). Residues 756–1082 (FTLIEKIGEG…VENIKNHIFF (327 aa)) enclose the Protein kinase domain. ATP contacts are provided by residues 762-770 (IGEGGFGQV) and Lys785. Catalysis depends on Asp880, which acts as the Proton acceptor. An AGC-kinase C-terminal domain is found at 1083 to 1203 (NGVPWGKLHD…PRADDQPLLW (121 aa)). 4 disordered regions span residues 1129–1159 (SLLPPPLPPPPQTPTQPQQPSLPPQTPNDKM), 1190–1219 (GFTYPRADDQPLLWNNNNNNNNNNNNNNNN), 1232–1285 (NNNN…NKTV), and 1300–1350 (NCNN…KQQQ). Residues 1131-1142 (LPPPLPPPPQTP) show a composition bias toward pro residues. Low complexity-rich tracts occupy residues 1204–1219 (NNNNNNNNNNNNNNNN), 1232–1283 (NNNN…SNNK), and 1300–1313 (NCNNNNNNDENNIN). Polar residues-rich tracts occupy residues 1314-1330 (TGNLTPPNSSPFNSGEN) and 1338-1350 (PTSPYGSYSKQQQ).

This sequence belongs to the protein kinase superfamily. AGC Ser/Thr protein kinase family.

It carries out the reaction L-seryl-[protein] + ATP = O-phospho-L-seryl-[protein] + ADP + H(+). It catalyses the reaction L-threonyl-[protein] + ATP = O-phospho-L-threonyl-[protein] + ADP + H(+). The chain is Probable serine/threonine-protein kinase DDB_G0278845 from Dictyostelium discoideum (Social amoeba).